A 571-amino-acid chain; its full sequence is Proline--tRNA ligase (571 aa).

Belongs to the class-II aminoacyl-tRNA synthetase family. ProS type 1 subfamily. In terms of assembly, homodimer.

The protein localises to the cytoplasm. It carries out the reaction tRNA(Pro) + L-proline + ATP = L-prolyl-tRNA(Pro) + AMP + diphosphate. Functionally, catalyzes the attachment of proline to tRNA(Pro) in a two-step reaction: proline is first activated by ATP to form Pro-AMP and then transferred to the acceptor end of tRNA(Pro). As ProRS can inadvertently accommodate and process non-cognate amino acids such as alanine and cysteine, to avoid such errors it has two additional distinct editing activities against alanine. One activity is designated as 'pretransfer' editing and involves the tRNA(Pro)-independent hydrolysis of activated Ala-AMP. The other activity is designated 'posttransfer' editing and involves deacylation of mischarged Ala-tRNA(Pro). The misacylated Cys-tRNA(Pro) is not edited by ProRS. In Actinobacillus succinogenes (strain ATCC 55618 / DSM 22257 / CCUG 43843 / 130Z), this protein is Proline--tRNA ligase.